Consider the following 574-residue polypeptide: Septation ring formation regulator EzrA (574 aa).

The Extracellular portion of the chain corresponds to 1-7; the sequence is MSSGIIL. The chain crosses the membrane as a helical span at residues 8–26; it reads LIVAIVLLVIIAYLVGVII. Residues 27–574 lie on the Cytoplasmic side of the membrane; sequence RKRNDSLITS…YEKTREHIRF (548 aa). Coiled coils occupy residues 102 to 141, 274 to 350, and 459 to 520; these read NFIR…EEKN, ELVT…ETES, and QLEA…SFEA.

Belongs to the EzrA family.

It localises to the cell membrane. Negative regulator of FtsZ ring formation; modulates the frequency and position of FtsZ ring formation. Inhibits FtsZ ring formation at polar sites. Interacts either with FtsZ or with one of its binding partners to promote depolymerization. This is Septation ring formation regulator EzrA from Streptococcus pyogenes serotype M4 (strain MGAS10750).